The primary structure comprises 221 residues: Ribonuclease 3 (221 aa).

An RNase III domain is found at 4–121 (LEQLEKKLGY…LWAAVYIDSG (118 aa)). Position 40 (Glu40) interacts with Mg(2+). Residue Asp44 is part of the active site. Mg(2+) is bound by residues Asp107 and Glu110. Residue Glu110 is part of the active site. The DRBM domain maps to 151 to 219 (DYKTILQEIT…AEELIKLLEE (69 aa)).

This sequence belongs to the ribonuclease III family. As to quaternary structure, homodimer. Mg(2+) serves as cofactor.

It localises to the cytoplasm. It catalyses the reaction Endonucleolytic cleavage to 5'-phosphomonoester.. Functionally, digests double-stranded RNA. Involved in the processing of primary rRNA transcript to yield the immediate precursors to the large and small rRNAs (23S and 16S). Also processes some mRNAs, and tRNAs when they are encoded in the rRNA operon. Probably processes pre-crRNA and tracrRNA of type II CRISPR loci if present in the organism. This Aquifex aeolicus (strain VF5) protein is Ribonuclease 3 (rnc).